Consider the following 171-residue polypeptide: Protein TraV (171 aa).

The signal sequence occupies residues 1 to 18 (MKQTSFFIPLLGTLLLYG). A lipid anchor (N-palmitoyl cysteine) is attached at cysteine 19. The S-diacylglycerol cysteine moiety is linked to residue cysteine 19.

The protein resides in the cell outer membrane. Its function is as follows. Involved in F pilus assembly. Appears to facilitate the polymerization of inner membrane-located pilin subunits into extracellular F pilus filaments. This chain is Protein TraV (traV), found in Escherichia coli (strain K12).